A 521-amino-acid polypeptide reads, in one-letter code: Vang-like protein 2 (521 aa).

A disordered region spans residues 1–81 (MDTESQYSGY…TTVVTGTSEH (81 aa)). The Cytoplasmic portion of the chain corresponds to 1–108 (MDTESQYSGY…VPLDCSRHLG (108 aa)). Over residues 15–33 (GHSRSSRKHRDRRDRHRSK) the composition is skewed to basic residues. The segment covering 57 to 67 (ESTRGDERDDN) has biased composition (basic and acidic residues). The segment covering 69–81 (GETTTVVTGTSEH) has biased composition (low complexity). The chain crosses the membrane as a helical span at residues 109-129 (VAAGAILALLSFLTPLAFLLL). Over 130–147 (PPLLWREELEPCGTACEG) the chain is Extracellular. Residues 148 to 168 (LFISVAFKLLILLLGSWALFF) traverse the membrane as a helical segment. Over 169-178 (RRPKASLPRV) the chain is Cytoplasmic. A helical transmembrane segment spans residues 179–199 (FVLRALLMVLVFLLVISYWLF). Residues 200–217 (YGVRILDARERSYQGVVQ) lie on the Extracellular side of the membrane. Residues 218–238 (FAVSLVDALLFVHYLAVVLLE) form a helical membrane-spanning segment. Residues 239 to 521 (LRQLQPQFTL…VMRLQSETSV (283 aa)) are Cytoplasmic-facing.

The protein belongs to the Vang family. As to quaternary structure, homodimer and heterodimer with Vangl1. Interacts through its C-terminal region with the N-terminal half of DVL1, DVL2 and DVL3. The PDZ domain of DVL1, DVL2 and DVL3 is required for the interaction. Variants Glu-255 and Asn-464 impair interaction with the DVL proteins. Also interacts with the PDZ domains of MAGI3, SCRIB/SCRB1 and FZD3. Interacts with PRICKLE3. Primarily expressed in the brain and epididymis. Not detected in the cochlea of Lp mice.

It is found in the cell membrane. In terms of biological role, involved in the control of early morphogenesis and patterning of both axial midline structures and the development of neural plate. Plays a role in the regulation of planar cell polarity, particularly in the orientation of stereociliary bundles in the cochlea. Required for polarization and movement of myocardializing cells in the outflow tract and seems to act via RHOA signaling to regulate this process. Required for cell surface localization of FZD3 and FZD6 in the inner ear. This chain is Vang-like protein 2 (Vangl2), found in Mus musculus (Mouse).